A 313-amino-acid chain; its full sequence is Formimidoylglutamase (313 aa).

Mn(2+)-binding residues include H130, D155, H157, D159, D241, and D243.

The protein belongs to the arginase family. Requires Mn(2+) as cofactor.

It carries out the reaction N-formimidoyl-L-glutamate + H2O = formamide + L-glutamate. The protein operates within amino-acid degradation; L-histidine degradation into L-glutamate; L-glutamate from N-formimidoyl-L-glutamate (hydrolase route): step 1/1. In terms of biological role, catalyzes the conversion of N-formimidoyl-L-glutamate to L-glutamate and formamide. The polypeptide is Formimidoylglutamase (Salmonella heidelberg (strain SL476)).